Here is a 370-residue protein sequence, read N- to C-terminus: Cytochrome b (370 aa).

Transmembrane regions (helical) follow at residues 25 to 45 (FGSM…FLAV), 69 to 90 (WLMQ…YIHI), 105 to 125 (WLSG…GYVL), and 170 to 190 (FFAL…LHIM). The heme b site is built by histidine 75 and histidine 89. Residues histidine 174 and histidine 188 each contribute to the heme b site. Residue histidine 193 participates in a ubiquinone binding. Transmembrane regions (helical) follow at residues 218–238 (YKDL…VSFF), 280–300 (LGGA…PFTH), 312–332 (FMQL…WTAT), and 339–358 (FTTI…ISNP).

Belongs to the cytochrome b family. In terms of assembly, the cytochrome bc1 complex contains 3 respiratory subunits (MT-CYB, CYC1 and UQCRFS1), 2 core proteins (UQCRC1 and UQCRC2) and probably 6 low-molecular weight proteins. Heme b is required as a cofactor.

The protein localises to the mitochondrion inner membrane. Functionally, component of the ubiquinol-cytochrome c reductase complex (complex III or cytochrome b-c1 complex) that is part of the mitochondrial respiratory chain. The b-c1 complex mediates electron transfer from ubiquinol to cytochrome c. Contributes to the generation of a proton gradient across the mitochondrial membrane that is then used for ATP synthesis. In Chilabothrus fordii (Ford's boa), this protein is Cytochrome b (MT-CYB).